The chain runs to 427 residues: O-methyltransferase sol2 (427 aa).

Residue D281 coordinates S-adenosyl-L-methionine. H327 (proton acceptor) is an active-site residue.

Belongs to the class I-like SAM-binding methyltransferase superfamily. Cation-independent O-methyltransferase family. COMT subfamily.

It functions in the pathway phytotoxin biosynthesis. In terms of biological role, O-methyltransferase; part of the gene cluster that mediates the biosynthesis of the phytotoxin solanapyrone, a causal agent of early blight disease of potato and tomato. The prosolanapyrone synthase sol1 is a polyketide synthase that produces the octaketide desmethylprosolanapyrone I via sequential condensations of 7 malonyl-CoA units with one acetyl-CoA unit, and one methylation step. The octaketide backbone is further methylated by the sol2 O-methyltransferase to yield prosolanapyrone I. Prosolanapyrone I is hydroxylated to prosolanapyrone II by the cytochrome P450 monooxygenase sol6. The solanapyrone synthase sol5 then catalyzes the oxidation of prosolanapyrone II and the subsequent Diels Alder cycloisomerization of the product prosolanapyrone III to solanapyrones A and D. Solanapyrones A and D are then converted into solanapyrones B and E, respectively, by the sol3 dehydrogenase. This chain is O-methyltransferase sol2 (sol2), found in Alternaria solani.